The sequence spans 51 residues: MREKIRLVSSAKTGHFYTTTKNKREMPNKMEIKKFDPVVRKHVMYKEAKIK.

The protein belongs to the bacterial ribosomal protein bL33 family.

The polypeptide is Large ribosomal subunit protein bL33 (Francisella philomiragia subsp. philomiragia (strain ATCC 25017 / CCUG 19701 / FSC 153 / O#319-036)).